Here is a 4383-residue protein sequence, read N- to C-terminus: MSKINKYGLELHWAPEFPWMFEDAEEKLDNPSSSEVDMICSTTAQKLETDGICPENHVMVDCRRLLKQECCVQSSLIREIVMNASPYHLEVLLQDALQSREAVLVTTPLGMSLEACYVRGCNPKGWTMGLFRRRSVCNTGRCTVNKHVAYQLYMIDPAGVCLGAGQFVGWVIPLAFMPVQSRKFIVPWVMYLRKRGEKGAYNKDHGCGGFGHVYDFKVEDAYDQVHDEPKGKFSKKAYALIRGYRGVKPLLYVDQYGCDYTGSLADGLEAYADKTLQEMKALFPTWSQELPFDVIVAWHVVRDPRYVMRLQSAATICSVAYVANPTEDLCDGSVVIKEPVHVYADDSIILRQYNLFDIMSHFYMEADTVVNAFYGVALKDCGFVMQFGYIDCEQDSCDFKGWIPGNMIDGFACTTCGHVYEVGDLIAQSSGVLPVNPVLHTKSAAGYGGFGCKDSFTLYGQTVVYFGGCVYWSPARNIWIPILKSSVKSYDSLVYTGVLGCKAIVKETNLICKALYLDYVQHKCGNLHQRELLGVSDVWHKQLLINRGVYKPLLENIDYFNMRRAKFSLETFTVCADGFMPFLLDDLVPRAYYLAVSGQAFCDYADKLCHAVVSKSKELLDVSLDSLGAAIHYLNSKIVDLAQHFSDFGTSFVSKIVHFFKTFTTSTALAFAWVLFHVLHGAYIVVESDIYFVKNIPRYASAVAQAFQSVAKVVLDSLRVTFIDGLSCFKIGRRRICLSGRKIYEVERGLLHSSQLPLDVYDLTMPSQVQKAKQKPIYLKGSGSDFSLADSVVEVVTTSLTPCGYSEPPKVADKICIVDNVYMAKAGDKYYPVVVDDHVGLLDQAWRVPCAGRRVTFKEQPTVKEIISMPKIIKVFYELDNDFNTILNTACGVFEVDDTVDMEEFYAVVIDAIEEKLSPCKELEGVGAKVSAFLQKLEDNPLFLFDEAGEEVFAPKLYCAFTAPEDDDFLEESDVEEDDVEGEETDLTITSAGQPCVASEQEESSEVLEDTLDDGPSVETSDSQVEEDVEMSDFVDLESVIQDYENVCFEFYTTEPEFVKVLGLYVPKATRNNCWLRSVLAVMQKLPCQFKDKNLQDLWVLYKQQYSQLFVDTLVNKIPANIVLPQGGYVADFAYWFLTLCDWQCVAYWKCIKCDLALKLKGLDAMFFYGDVVSHICKCGESMVLIDVDVPFTAHFALKDKLFCAFITKRIVYKAACVVDVNDSHSMAVVDGKQIDDHRITSITSDKFDFIIGHGMSFSMTTFEIAQLYGSCITPNVCFVKGDIIKVSKLVKAEVVVNPANGHMVHGGGVAKAIAVAAGQQFVKETTNMVKSKGVCATGDCYVSTGGKLCKTVLNVVGPDARTQGKQSYVLLERVYKHFNNYDCVVTTLISAGIFSVPSDVSLTYLLGTAKKQVVLVSNNQEDFDLISKCQITAVEGTKKLAARLSFNVGRSIVYETDANKLILINDVAFVSTFNVLQDVLSLRHDIALDDDARTFVQSNVDVLPEGWRVVNKFYQINGVRTVKYFECTGGIDICSQDKVFGYVQQGIFNKATVAQIKALFLDKVDILLTVDGVNFTNRFVPVGESFGKSLGNVFCDGVNVTKHKCDINYKGKVFFQFDNLSSEDLKAVRSSFNFDQKELLAYYNMLVNCFKWQVVVNGKYFTFKQANNNCFVNVSCLMLQSLHLTFKIVQWQEAWLEFRSGRPARFVALVLAKGGFKFGDPADSRDFLRVVFSQVDLTGAICDFEIACKCGVKQEQRTGLDAVMHFGTLSREDLEIGYTVDCSCGKKLIHCVRFDVPFLICSNTPASVKLPKGVGSANIFIGDNVGHYVHVKCEQSYQLYDASNVKKVTDVTGKLSDCLYLKNLKQTFKSVLTTYYLDDVKKIEYKPDLSQYYCDGGKYYTQRIIKAQFKTFEKVDGVYTNFKLIGHTVCDSLNSKLGFDSSKEFVEYKITEWPTATGDVVLANDDLYVKRYERGCITFGKPVIWLSHEKASLNSLTYFNRPLLVDDNKFDVLKVDDVDDSGDSSESGAKETKEINIIKLSGVKKPFKVEDSVIVNDDTSETKYVKSLSIVDVYDMWLTGCKYVVRTANALSRAVNVPTIRKFIKFGMTLVSIPIDLLNLREIKPAVNVVKAVRNKTSACFNFIKWLFVLLFGWIKISADNKVIYTTEIASKLTCKLVALAFKNAFLTFKWSMVARGACIIATIFLLWFNFIYANVIFSDFYLPKIGFLPTFVGKIAQWIKNTFSLVTICDLYSIQDVGFKNQYCNGSIACQFCLAGFDMLDNYKAIDVVQYEADRRAFVDYTGVLKIVIELIVSYALYTAWFYPLFALISIQILTTWLPELFMLSTLHWSFRLLVALANMLPAHVFMRFYIIIASFIKLFSLFKHVAYGCSKSGCLFCYKRNRSLRVKCSTIVGGMIRYYDVMANGGTGFCSKHQWNCIDCDSYKPGNTFITVEAALDLSKELKRPIQPTDVAYHTVTDVKQVGCSMRLFYDRDGQRIYDDVNASLFVDYSNLLHSKVKSVPNMHVVVVENDADKANFLNAAVFYAQSLFRPILMVDKNLITTANTGTSVTETMFDVYVDTFLSMFDVDKKSLNALIATAHSSIKQGTQIYKVLDTFLSCARKSCSIDSDVDTKCLADSVMSAVSAGLELTDESCNNLVPTYLKSDNIVAADLGVLIQNSAKHVQGNVAKIAGVSCIWSVDAFNQFSSDFQHKLKKACCKTGLKLKLTYNKQMANVSVLTTPFSLKGGAVFSYFVYVCFVLSLVCFIGLWCLMPTYTVHKSDFQLPVYASYKVLDNGVIRDVSVEDVCFANKFEQFDQWYESTFGLSYYSNSMACPIVVAVIDQDFGSTVFNVPTKVLRYGYHVLHFITHALSADGVQCYTPHSQISYSNFYASGCVLSSACTMFTMADGSPQPYCYTDGLMQNASLYSSLVPHVRYNLANAKGFIRFPEVLREGLVRVVRTRSMSYCRVGLCEEADEGICFNFNGSWVLNNDYYRSLPGTFCGRDVFDLIYQLFKGLAQPVDFLALTASSIAGAILAVIVVLVFYYLIKLKRAFGDYTSVVFVNVIVWCVNFMMLFVFQVYPTLSCVYAICYFYATLYFPSEISVIMHLQWLVMYGTIMPLWFCLLYIAVVVSNHAFWVFSYCRKLGTSVRSDGTFEEMALTTFMITKDSYCKLKNSLSDVAFNRYLSLYNKYRYYSGKMDTAAYREAACSQLAKAMDTFTNNNGSDVLYQPPTASVSTSFLQSGIVKMVNPTSKVEPCVVSVTYGNMTLNGLWLDDKVYCPRHVICSASDMTNPDYTNLLCRVTSSDFTVLFDRLSLTVMSYQMRGCMLVLTVTLQNSRTPKYTFGVVKPGETFTVLAAYNGKPQGAFHVTMRSSYTIKGSFLCGSCGSVGYVIMGDCVKFVYMHQLELSTGCHTGTDFNGDFYGPYKDAQVVQLPIQDYIQSVNFLAWLYAAILNNCNWFIQSDKCSVEDFNVWALSNGFSQVKSDLVIDALASMTGVSLETLLAAIKRLKNGFQGRQIMGSCSFEDELTPSDVYQQLAGIKLQSKRTRLFKGTVCWIMASTFLFSCIITAFVKWTMFMYVTTNMFSITFCALCVISLAMLLVKHKHLYLTMYITPVLFTLLYNNYLVVYKHTFRGYVYAWLSYYVPSVEYTYTDEVIYGMLLLVGMVFVTLRSINHDLFSFIMFVGRLISVFSLWYKGSNLEEEILLMLASLFGTYTWTTVLSMAVAKVIAKWVAVNVLYFTDIPQIKIVLLCYLFIGYIISCYWGLFSLMNSLFRMPLGVYNYKISVQELRYMNANGLRPPKNSFEALMLNFKLLGIGGVPIIEVSQFQSKLTDVKCANVVLLNCLQHLHVASNSKLWHYCSTLHNEILATSDLSVAFEKLAQLLIVLFANPAAVDSKCLTSIEEVCDDYAKDNTVLQALQSEFVNMASFVEYEVAKKNLDEARFSGSANQQQLKQLEKACNIAKSAYERDRAVAKKLERMADLALTNMYKEARINDKKSKVVSALQTMLFSMVRKLDNQALNSILDNAVKGCVPLNAIPSLAANTLNIIVPDKSVYDQIVDNIYVTYAGNVWQIQTIQDSDGTNKQLNEISDDCNWPLVIIANRYNEVSATVLQNNELMPAKLKIQVVNSGPDQTCNTPTQCYYNNSNNGKIVYAILSDVDGLKYTKILKDDGNFVVLELDPPCKFTVQDAKGLKIKYLYFVKGCNTLARGWVVGTISSTVRLQAGTATEYASNSSILSLCAFSVDPKKTYLDFIQQGGTPIANCVKMLCDHAGTGMAITVKPDATTSQDSYGGASVCIYCRARVEHPDVDGLCKLRGKFVQVPVGIKDPVSYVLTHDVCRVCGFWRDGSCSCVSTDTTVQSKDTNFLNGFGVRV.

In terms of domain architecture, CoV Nsp1 globular spans Pro-54–Gly-196. Residues Phe-216–Gly-246 enclose the BetaCoV Nsp1 C-terminal domain. Residues Leu-250–Ala-514 enclose the CoV Nsp2 N-terminal domain. Zn(2+) contacts are provided by Cys-392, Cys-397, Cys-413, and Cys-416. A C4 region spans residues Cys-392–Cys-416. The 190-residue stretch at Cys-524–Val-713 folds into the CoV Nsp2 middle domain. A CoV Nsp2 C-terminal domain is found at Arg-733 to Ala-851. The Ubiquitin-like 1 domain maps to Arg-853–Asp-966. The interval Pro-995 to Val-1025 is disordered. The span at Glu-1000–Asp-1013 shows a compositional bias: acidic residues. The region spanning Asp-1036–Thr-1274 is the Peptidase C16 1 domain. The For PL1-PRO activity role is filled by Cys-1074. Positions 1151, 1154, 1177, and 1179 each coordinate Zn(2+). The C4-type 1 zinc finger occupies Cys-1151 to Cys-1179. Catalysis depends on for PL1-PRO activity residues His-1225 and Asp-1236. One can recognise a Macro domain in the interval Pro-1275–Val-1435. The DPUP domain maps to Asp-1491–Asp-1563. The Ubiquitin-like 2 domain occupies Leu-1562–Gln-1617. Positions Ser-1631 to Gln-1892 constitute a Peptidase C16 2 domain. The active-site For PL2-PRO activity is Cys-1671. Zn(2+) is bound by residues Cys-1749, Cys-1751, Cys-1783, and Cys-1785. The C4-type 2 zinc-finger motif lies at Cys-1749–Cys-1785. Catalysis depends on for PL2-PRO activity residues His-1828 and Asp-1842. Residues Ile-1906–Asp-2007 enclose the Nucleic acid-binding domain. Residues Asp-2020–Glu-2169 enclose the G2M domain. The next 3 helical transmembrane spans lie at Thr-2138–Ile-2158, Ala-2199–Phe-2219, and Asp-2221–Ile-2241. Residues Thr-2138–Phe-2385 are HD1. In terms of domain architecture, 3Ecto spans Gly-2235–Asp-2296. 2 disulfides stabilise this stretch: Cys-2251-Cys-2275 and Cys-2266-Cys-2272. The next 3 helical transmembrane spans lie at Leu-2313–Ile-2333, Leu-2343–Leu-2363, and Ala-2365–Phe-2385. Residues Ser-2383 to Asp-2473 form a Y1 region. One can recognise a CoV Nsp3 Y domain in the interval Ser-2383–Gly-2750. The Zn(2+) site is built by His-2387, Cys-2392, Cys-2397, Cys-2400, Cys-2433, His-2436, Cys-2440, and Cys-2443. A ZF1 region spans residues His-2387–Cys-2400. A ZF2 region spans residues Cys-2433–Cys-2443. The interval Val-2474–Ala-2566 is Y2. A coV-Y region spans residues Val-2474–Gly-2750. Residues Asn-2567 to Gly-2649 form a Y3 region. The interval Leu-2650–Gly-2750 is Y4. 7 helical membrane passes run Val-2752–Trp-2772, Ser-2824–Ile-2844, Val-3009–Leu-3029, Ala-3031–Ile-3051, Val-3063–Val-3083, Val-3090–Met-3110, and Leu-3115–Val-3135. The tract at residues Val-2752–Val-3135 is HD2. Positions Leu-3149–Gln-3246 constitute a Nsp4C domain. Residues Ser-3247–Gln-3549 form the Peptidase C30 domain. Residues His-3287 and Cys-3391 each act as for 3CL-PRO activity in the active site. The tract at residues Leu-3319–Ser-3775 is HD3. 7 helical membrane-spanning segments follow: residues Gly-3558–Val-3578, Thr-3588–Val-3608, Leu-3615–Tyr-3635, Thr-3657–Leu-3677, Leu-3684–Gly-3704, Ile-3711–Ala-3731, and Ile-3755–Ser-3775. One can recognise a RdRp Nsp7 cofactor domain in the interval Ser-3837 to Gln-3925. Residues Ala-3926–Gln-4122 form the RdRp Nsp8 cofactor domain. One can recognise a Nsp9 ssRNA-binding domain in the interval Asn-4123–Gln-4232. One can recognise an ExoN/MTase coactivator domain in the interval Ala-4233–Ser-4370. 8 residues coordinate Zn(2+): Cys-4306, Cys-4309, His-4315, Cys-4322, Cys-4348, Cys-4351, Cys-4359, and Cys-4361. Zinc fingers lie at residues Cys-4306 to Cys-4322 and Cys-4348 to Cys-4361.

It belongs to the coronaviruses polyprotein 1ab family. 3CL-PRO exists as monomer and homodimer. Eight copies of nsp7 and eight copies of nsp8 assemble to form a heterohexadecamer. Nsp9 is a dimer. Nsp10 forms a dodecamer. Post-translationally, specific enzymatic cleavages in vivo by its own proteases yield mature proteins. 3CL-PRO and PL-PRO proteinases are autocatalytically processed.

Its subcellular location is the host membrane. It is found in the host cytoplasm. It localises to the host perinuclear region. It carries out the reaction Thiol-dependent hydrolysis of ester, thioester, amide, peptide and isopeptide bonds formed by the C-terminal Gly of ubiquitin (a 76-residue protein attached to proteins as an intracellular targeting signal).. The catalysed reaction is TSAVLQ-|-SGFRK-NH2 and SGVTFQ-|-GKFKK the two peptides corresponding to the two self-cleavage sites of the SARS 3C-like proteinase are the two most reactive peptide substrates. The enzyme exhibits a strong preference for substrates containing Gln at P1 position and Leu at P2 position.. It catalyses the reaction a 5'-end diphospho-ribonucleoside in mRNA + GTP + H(+) = a 5'-end (5'-triphosphoguanosine)-ribonucleoside in mRNA + diphosphate. The papain-like proteinase 1 (PL1-PRO) and papain-like proteinase 2 (PL2-PRO) are responsible for the cleavages located at the N-terminus of the replicase polyprotein. In addition, PLP2 possesses a deubiquitinating/deISGylating activity and processes both 'Lys-48'- and 'Lys-63'-linked polyubiquitin chains from cellular substrates. Antagonizes innate immune induction of type I interferon by blocking the phosphorylation, dimerization and subsequent nuclear translocation of host IRF-3. Its function is as follows. Responsible for the majority of cleavages as it cleaves the C-terminus of replicase polyprotein at 11 sites. Recognizes substrates containing the core sequence [ILMVF]-Q-|-[SGACN]. Inhibited by the substrate-analog Cbz-Val-Asn-Ser-Thr-Leu-Gln-CMK. Also contains an ADP-ribose-1''-phosphate (ADRP)-binding function. Functionally, nsp7-nsp8 hexadecamer may possibly confer processivity to the polymerase, maybe by binding to dsRNA or by producing primers utilized by the latter. In terms of biological role, catalytic subunit of viral RNA capping enzyme which catalyzes the RNA guanylyltransferase reaction for genomic and sub-genomic RNAs. The kinase-like NiRAN domain of NSP12 transfers RNA to the amino terminus of NSP9, forming a covalent RNA-protein intermediate. Subsequently, the NiRAN domain transfers RNA to GDP, forming the core cap structure GpppA-RNA. The NSP14 and NSP16 methyltransferases then add methyl groups to form functional cap structures. Binds to the 40S ribosomal subunit and inhibits host translation. The nsp1-40S ribosome complex further induces an endonucleolytic cleavage near the 5'UTR of host mRNAs, targeting them for degradation. This inhibits the integrated stress response (ISR) in the infected cell by preventing EIF2S1/eIF2-alpha phosphorylation upstream of stress granule formation and depletes host G3BP1. By suppressing host gene expression, nsp1 facilitates efficient viral gene expression in infected cells and evasion from host immune response. In Human coronavirus OC43 (HCoV-OC43), this protein is Replicase polyprotein 1a.